The following is a 428-amino-acid chain: Dihydroorotase (428 aa).

Zn(2+)-binding residues include histidine 60 and histidine 62. Substrate-binding positions include 62 to 64 (HLR) and asparagine 94. Positions 152, 179, and 232 each coordinate Zn(2+). Asparagine 278 is a substrate binding site. Position 305 (aspartate 305) interacts with Zn(2+). The active site involves aspartate 305. Histidine 309 provides a ligand contact to substrate.

The protein belongs to the metallo-dependent hydrolases superfamily. DHOase family. Class I DHOase subfamily. Zn(2+) serves as cofactor.

It catalyses the reaction (S)-dihydroorotate + H2O = N-carbamoyl-L-aspartate + H(+). The protein operates within pyrimidine metabolism; UMP biosynthesis via de novo pathway; (S)-dihydroorotate from bicarbonate: step 3/3. Catalyzes the reversible cyclization of carbamoyl aspartate to dihydroorotate. The sequence is that of Dihydroorotase from Ruminiclostridium cellulolyticum (strain ATCC 35319 / DSM 5812 / JCM 6584 / H10) (Clostridium cellulolyticum).